The chain runs to 245 residues: tRNA (guanine-N(1)-)-methyltransferase (245 aa).

S-adenosyl-L-methionine-binding positions include Gly114 and 133–138 (LGDFVI).

It belongs to the RNA methyltransferase TrmD family. As to quaternary structure, homodimer.

It is found in the cytoplasm. It catalyses the reaction guanosine(37) in tRNA + S-adenosyl-L-methionine = N(1)-methylguanosine(37) in tRNA + S-adenosyl-L-homocysteine + H(+). In terms of biological role, specifically methylates guanosine-37 in various tRNAs. The chain is tRNA (guanine-N(1)-)-methyltransferase from Pediococcus pentosaceus (strain ATCC 25745 / CCUG 21536 / LMG 10740 / 183-1w).